Here is a 59-residue protein sequence, read N- to C-terminus: Small, acid-soluble spore protein H (59 aa).

It belongs to the SspH family.

The protein localises to the spore core. This is Small, acid-soluble spore protein H from Bacillus cereus (strain ZK / E33L).